A 508-amino-acid polypeptide reads, in one-letter code: Maturase K (508 aa).

This sequence belongs to the intron maturase 2 family. MatK subfamily.

It localises to the plastid. It is found in the chloroplast. Functionally, usually encoded in the trnK tRNA gene intron. Probably assists in splicing its own and other chloroplast group II introns. This Coronilla varia (Crown vetch) protein is Maturase K.